The chain runs to 53 residues: UPF0391 membrane protein YtjA (53 aa).

Helical transmembrane passes span 4-24 (WGIIFLVIALIAAALGFGGLA) and 30-48 (AAKIVFVVGIILFLVSLFM).

This sequence belongs to the UPF0391 family.

It is found in the cell membrane. The chain is UPF0391 membrane protein YtjA from Escherichia coli O6:K15:H31 (strain 536 / UPEC).